A 701-amino-acid chain; its full sequence is Elongation factor G (701 aa).

Positions 8–291 constitute a tr-type G domain; that stretch reads SRYRNIGIVA…AVIDYLPAPI (284 aa). GTP-binding positions include 17 to 24, 89 to 93, and 143 to 146; these read AHVDAGKT, DTPGH, and NKMD.

The protein belongs to the TRAFAC class translation factor GTPase superfamily. Classic translation factor GTPase family. EF-G/EF-2 subfamily.

It localises to the cytoplasm. Its function is as follows. Catalyzes the GTP-dependent ribosomal translocation step during translation elongation. During this step, the ribosome changes from the pre-translocational (PRE) to the post-translocational (POST) state as the newly formed A-site-bound peptidyl-tRNA and P-site-bound deacylated tRNA move to the P and E sites, respectively. Catalyzes the coordinated movement of the two tRNA molecules, the mRNA and conformational changes in the ribosome. This chain is Elongation factor G, found in Pseudomonas syringae pv. tomato (strain ATCC BAA-871 / DC3000).